The following is a 353-amino-acid chain: Photosystem II protein D1 (353 aa).

T2 is subject to N-acetylthreonine. Phosphothreonine is present on T2. Helical transmembrane passes span 29–46 (YIGW…TATS), 118–133 (HFLL…EWEL), and 142–156 (WIAV…AATA). H118 contacts chlorophyll a. Pheophytin a is bound at residue Y126. 2 residues coordinate [CaMn4O5] cluster: D170 and E189. Residues 197–218 (FHMLGVAGVFGGSLFSAMHGSL) traverse the membrane as a helical segment. H198 is a chlorophyll a binding site. A quinone is bound by residues H215 and 264–265 (SF). H215 lines the Fe cation pocket. H272 contacts Fe cation. A helical membrane pass occupies residues 274–288 (FLAAWPVVGIWFTAL). H332, E333, D342, and A344 together coordinate [CaMn4O5] cluster. A propeptide spanning residues 345–353 (ALEVPSLNG) is cleaved from the precursor.

This sequence belongs to the reaction center PufL/M/PsbA/D family. In terms of assembly, PSII is composed of 1 copy each of membrane proteins PsbA, PsbB, PsbC, PsbD, PsbE, PsbF, PsbH, PsbI, PsbJ, PsbK, PsbL, PsbM, PsbT, PsbX, PsbY, PsbZ, Psb30/Ycf12, at least 3 peripheral proteins of the oxygen-evolving complex and a large number of cofactors. It forms dimeric complexes. It depends on The D1/D2 heterodimer binds P680, chlorophylls that are the primary electron donor of PSII, and subsequent electron acceptors. It shares a non-heme iron and each subunit binds pheophytin, quinone, additional chlorophylls, carotenoids and lipids. D1 provides most of the ligands for the Mn4-Ca-O5 cluster of the oxygen-evolving complex (OEC). There is also a Cl(-1) ion associated with D1 and D2, which is required for oxygen evolution. The PSII complex binds additional chlorophylls, carotenoids and specific lipids. as a cofactor. Post-translationally, tyr-161 forms a radical intermediate that is referred to as redox-active TyrZ, YZ or Y-Z. C-terminally processed by CTPA; processing is essential to allow assembly of the oxygen-evolving complex and thus photosynthetic growth.

It is found in the plastid. The protein localises to the chloroplast thylakoid membrane. The catalysed reaction is 2 a plastoquinone + 4 hnu + 2 H2O = 2 a plastoquinol + O2. In terms of biological role, photosystem II (PSII) is a light-driven water:plastoquinone oxidoreductase that uses light energy to abstract electrons from H(2)O, generating O(2) and a proton gradient subsequently used for ATP formation. It consists of a core antenna complex that captures photons, and an electron transfer chain that converts photonic excitation into a charge separation. The D1/D2 (PsbA/PsbD) reaction center heterodimer binds P680, the primary electron donor of PSII as well as several subsequent electron acceptors. This is Photosystem II protein D1 from Lolium perenne (Perennial ryegrass).